We begin with the raw amino-acid sequence, 102 residues long: MVRRSKGFRSRTRKKLRKKPRERGLSPLGPMTQEFEEGQKVHIVIDPSVHKGMPHPRYHGRTGEVVGRQGRAYIVKIRDGGKEKKLIVYPEHLKPQEQPELQ.

A compositionally biased stretch (basic residues) spans 1 to 21 (MVRRSKGFRSRTRKKLRKKPR). The interval 1–33 (MVRRSKGFRSRTRKKLRKKPRERGLSPLGPMTQ) is disordered.

It belongs to the eukaryotic ribosomal protein eL21 family.

This is Large ribosomal subunit protein eL21 from Methanopyrus kandleri (strain AV19 / DSM 6324 / JCM 9639 / NBRC 100938).